Here is a 94-residue protein sequence, read N- to C-terminus: Putative pterin-4-alpha-carbinolamine dehydratase (94 aa).

It belongs to the pterin-4-alpha-carbinolamine dehydratase family.

It carries out the reaction (4aS,6R)-4a-hydroxy-L-erythro-5,6,7,8-tetrahydrobiopterin = (6R)-L-erythro-6,7-dihydrobiopterin + H2O. This is Putative pterin-4-alpha-carbinolamine dehydratase from Mycobacterium sp. (strain KMS).